The primary structure comprises 258 residues: Thymidylate synthase (258 aa).

Arg-21 is a binding site for dUMP. His-51 contributes to the (6R)-5,10-methylene-5,6,7,8-tetrahydrofolate binding site. 121–122 (RR) contributes to the dUMP binding site. Residue Cys-141 is the Nucleophile of the active site. DUMP is bound by residues 161–164 (RSAD), Asn-172, and 202–204 (HLY). (6R)-5,10-methylene-5,6,7,8-tetrahydrofolate is bound at residue Asp-164. (6R)-5,10-methylene-5,6,7,8-tetrahydrofolate is bound at residue Ala-257.

Belongs to the thymidylate synthase family. Bacterial-type ThyA subfamily. As to quaternary structure, homodimer.

It localises to the cytoplasm. It carries out the reaction dUMP + (6R)-5,10-methylene-5,6,7,8-tetrahydrofolate = 7,8-dihydrofolate + dTMP. It functions in the pathway pyrimidine metabolism; dTTP biosynthesis. Its function is as follows. Catalyzes the reductive methylation of 2'-deoxyuridine-5'-monophosphate (dUMP) to 2'-deoxythymidine-5'-monophosphate (dTMP) while utilizing 5,10-methylenetetrahydrofolate (mTHF) as the methyl donor and reductant in the reaction, yielding dihydrofolate (DHF) as a by-product. This enzymatic reaction provides an intracellular de novo source of dTMP, an essential precursor for DNA biosynthesis. The protein is Thymidylate synthase of Dichelobacter nodosus (strain VCS1703A).